A 550-amino-acid polypeptide reads, in one-letter code: MAAKDVKFGRDAREGILKGVDTLANAVKVTLGPKGRNVVIEKSFGAPRITKDGVTVAKEIELKDKYENMGAQMLREVASKTNDLAGDGTTTATVLGQAIVREGMKSVAAGMNPMDLKRGIDIAVTKVVENLKSRSKDVAGSEEIAQVGIISANGDREVGEKIAEAMEKVGKEGVITVDESKGLEFELETVEGMQFDRGYLSPYFITNPDKMTVELENPYILIHEKKLSNLQAMLPILEAAVQSGRPLLIIAEDIEGEALATLVVNKLRGGLKVAAVKAPGFGDRRKAMLQDIAILTKGEMISEDLGIKLENVTLGMLGEAKRVTIDKDNTTIVDGAGDEADIKARVNEIRTQIDNTTSDYDREKLQERLAKLAGGVAVIKVGGASEVEVKERKDRVDDALHATRAAVEEGIVPGGGTALLYATKVLEGLKGENDDQTRGIDIVRKAIVAPVRQIATNAGHDGAVISGNLLREDNESQGFNAATDTYEDLVKAGVIDPTKVVRVALQDAASVAGLLITTEAAISEVPEDKSSGGGMPDMGGMGGMGGMGGF.

Residues 30-33 (TLGP), lysine 51, 87-91 (DGTTT), glycine 415, 480-482 (NAA), and aspartate 496 contribute to the ATP site.

Belongs to the chaperonin (HSP60) family. Forms a cylinder of 14 subunits composed of two heptameric rings stacked back-to-back. Interacts with the co-chaperonin GroES.

The protein resides in the cytoplasm. It carries out the reaction ATP + H2O + a folded polypeptide = ADP + phosphate + an unfolded polypeptide.. Its function is as follows. Together with its co-chaperonin GroES, plays an essential role in assisting protein folding. The GroEL-GroES system forms a nano-cage that allows encapsulation of the non-native substrate proteins and provides a physical environment optimized to promote and accelerate protein folding. The protein is Chaperonin GroEL 2 of Erythrobacter litoralis (strain HTCC2594).